The chain runs to 443 residues: C4-dicarboxylate transport protein (443 aa).

The next 9 membrane-spanning stretches (helical) occupy residues 17-37 (PFYSHLYVQVLAAIAAGILLG), 57-77 (LVKMIIAPVIFLTVATGIAGM), 92-112 (LYFLTFSTLALVIGMVVANVV), 139-159 (EQSIVGFLTNIIPTTIVGAFA), 161-181 (GDILQVLFFSVLFGIALAMVG), 201-221 (LVAILMKAAPIGAFGAMAFTI), 234-254 (MLIGTFYLTSLLFVLVVLGAV), 320-340 (IYMTLAALFIAQATGINLSWG), and 368-388 (AATLSVVPSVPVAGMALILGI).

The protein belongs to the dicarboxylate/amino acid:cation symporter (DAACS) (TC 2.A.23) family.

The protein resides in the cell inner membrane. Functionally, responsible for the transport of dicarboxylates such as succinate, fumarate, and malate from the periplasm across the membrane. The sequence is that of C4-dicarboxylate transport protein from Rhizobium leguminosarum bv. trifolii (strain WSM2304).